The sequence spans 250 residues: Triosephosphate isomerase (250 aa).

9-11 is a binding site for substrate; that stretch reads NWK. Catalysis depends on His-95, which acts as the Electrophile. The active-site Proton acceptor is Glu-167. Residues Gly-173, Ser-213, and 234–235 contribute to the substrate site; that span reads GG.

The protein belongs to the triosephosphate isomerase family. Homodimer.

It is found in the cytoplasm. It carries out the reaction D-glyceraldehyde 3-phosphate = dihydroxyacetone phosphate. The protein operates within carbohydrate biosynthesis; gluconeogenesis. Its pathway is carbohydrate degradation; glycolysis; D-glyceraldehyde 3-phosphate from glycerone phosphate: step 1/1. Functionally, involved in the gluconeogenesis. Catalyzes stereospecifically the conversion of dihydroxyacetone phosphate (DHAP) to D-glyceraldehyde-3-phosphate (G3P). This Flavobacterium psychrophilum (strain ATCC 49511 / DSM 21280 / CIP 103535 / JIP02/86) protein is Triosephosphate isomerase.